A 129-amino-acid chain; its full sequence is Transmembrane protein 105 (129 aa).

Helical transmembrane passes span 23–43 (AGNVIGQLIYLLTWSLFTAWL) and 94–114 (FLAGGLHLVPSSLSLAACGVV).

Its subcellular location is the membrane. This is Transmembrane protein 105 (TMEM105) from Homo sapiens (Human).